Here is a 659-residue protein sequence, read N- to C-terminus: Alpha-galactosidase D (659 aa).

The first 20 residues, 1–20, serve as a signal peptide directing secretion; it reads MRALVPMVVAATALASPAPA. 3 N-linked (GlcNAc...) asparagine glycosylation sites follow: Asn-48, Asn-86, and Asn-130. A disulfide bridge links Cys-125 with Cys-158. Asp-156 serves as the catalytic Nucleophile. Residue Asn-183 is glycosylated (N-linked (GlcNAc...) asparagine). 201–205 contributes to the substrate binding site; sequence EWGID. The active-site Proton donor is the Asp-223. N-linked (GlcNAc...) asparagine glycans are attached at residues Asn-438, Asn-450, Asn-484, Asn-551, and Asn-583.

This sequence belongs to the glycosyl hydrolase 27 family.

The protein localises to the secreted. The catalysed reaction is Hydrolysis of terminal, non-reducing alpha-D-galactose residues in alpha-D-galactosides, including galactose oligosaccharides, galactomannans and galactolipids.. Functionally, hydrolyzes a variety of simple alpha-D-galactoside as well as more complex molecules such as oligosaccharides and polysaccharides. Active on paranitrophenyl-alpha-galactoside but not on raffinose, locust bean gum and gum guar. This chain is Alpha-galactosidase D (aglD), found in Emericella nidulans (strain FGSC A4 / ATCC 38163 / CBS 112.46 / NRRL 194 / M139) (Aspergillus nidulans).